The primary structure comprises 374 residues: Ribonuclease D (374 aa).

A 3'-5' exonuclease domain is found at 3–171 (YQLITTDDGL…MAIRLVEETT (169 aa)). Residues 210 to 289 (KGRHLACLQK…AETQTMDAAE (80 aa)) form the HRDC domain.

This sequence belongs to the RNase D family. It depends on a divalent metal cation as a cofactor.

It localises to the cytoplasm. It carries out the reaction Exonucleolytic cleavage that removes extra residues from the 3'-terminus of tRNA to produce 5'-mononucleotides.. Exonuclease involved in the 3' processing of various precursor tRNAs. Initiates hydrolysis at the 3'-terminus of an RNA molecule and releases 5'-mononucleotides. The chain is Ribonuclease D from Musicola paradisiaca (strain Ech703) (Dickeya paradisiaca).